The following is a 145-amino-acid chain: Ribosomal RNA large subunit methyltransferase H (145 aa).

S-adenosyl-L-methionine is bound by residues glycine 94 and 113–118; that span reads LSPLTF.

Belongs to the RNA methyltransferase RlmH family. Homodimer.

Its subcellular location is the cytoplasm. It catalyses the reaction pseudouridine(1915) in 23S rRNA + S-adenosyl-L-methionine = N(3)-methylpseudouridine(1915) in 23S rRNA + S-adenosyl-L-homocysteine + H(+). Its function is as follows. Specifically methylates the pseudouridine at position 1915 (m3Psi1915) in 23S rRNA. The sequence is that of Ribosomal RNA large subunit methyltransferase H from Sorangium cellulosum (strain So ce56) (Polyangium cellulosum (strain So ce56)).